A 1431-amino-acid polypeptide reads, in one-letter code: 1-phosphatidylinositol 4,5-bisphosphate phosphodiesterase beta egl-8 (1431 aa).

The region spanning 340-491 (MDMDQPLCHY…LRKKILIKNK (152 aa)) is the PI-PLC X-box domain. His355 is an active-site residue. Ca(2+)-binding residues include Asn356, Glu385, and Asp387. His403 is a catalytic residue. Glu437 contacts Ca(2+). Lys489 and Lys491 together coordinate substrate. Disordered regions lie at residues 510 to 601 (KLDE…MVPD) and 632 to 692 (RRQS…SGPS). Acidic residues predominate over residues 543 to 556 (EEVDDDTSDDDDDP). Low complexity-rich tracts occupy residues 572–586 (NTTS…ARSS), 652–661 (SSSSPATPSI), and 668–692 (ATSS…SGPS). The region spanning 758-874 (LSSLVNYTHP…GYLLKPDFLR (117 aa)) is the PI-PLC Y-box domain. Substrate-binding residues include Ser787 and Arg814. The region spanning 877-1002 (DRTFDPFSES…SLRSDTNQSF (126 aa)) is the C2 domain. Disordered stretches follow at residues 1072–1119 (QPPR…VAVD), 1150–1176 (DLRK…SSIA), and 1188–1216 (NNRR…SASG). The segment covering 1074–1113 (PRQNGSSADLLANNGQTGSARGDQTSSMASSTIRSPNEQP) has biased composition (polar residues). Positions 1135 to 1166 (KAFAKLLKRFQKELDDLRKKHQKQRDSIQKQQ) form a coiled coil. Residues 1150 to 1162 (DLRKKHQKQRDSI) show a composition bias toward basic and acidic residues. Over residues 1191-1200 (RSTKKEKGSR) the composition is skewed to basic residues. The segment covering 1204–1216 (TASVSSGCGSASG) has biased composition (low complexity). 2 coiled-coil regions span residues 1288 to 1318 (DEEE…KNQM) and 1368 to 1402 (EKNL…QLEQ).

The cofactor is Ca(2+). Expressed in most or all neurons with high expression in the head and tail ganglia and low expression in the motor neurons of the ventral cord. Expressed in the intestine (at protein level). In males, expressed in vas deferens, spicule protractor muscles, diagonal muscles and a male-specific neuron.

The protein resides in the perikaryon. Its subcellular location is the cell projection. It is found in the axon. The protein localises to the synapse. It localises to the cell junction. The protein resides in the adherens junction. The catalysed reaction is a 1,2-diacyl-sn-glycero-3-phospho-(1D-myo-inositol-4,5-bisphosphate) + H2O = 1D-myo-inositol 1,4,5-trisphosphate + a 1,2-diacyl-sn-glycerol + H(+). Functionally, mediates the production of the second messenger molecules diacylglycerol (DAG) and inositol 1,4,5-trisphosphate (IP3) which plays an important role in the regulation of intracellular signaling cascades. Required in the nervous system to modulate neuronal activity. Facilitates synaptic transmission at neuromuscular junctions by regulating the release of acetylcholine from the motor neurons and thus affecting locomotion. Plays a role in efficient egg laying and defecation. Involved in axon regeneration after injury. Plays a role in male mating behavior by regulating spicule insertion and sperm transfer. By triggering Ca(2+) transient via IP3-mediated activation of IPR3 receptor itr-1 in ASH sensory neurons, regulates avoidance behavior in response to nose touch. By activating tpa-1 via DAG production, required for the expression of antimicrobial peptide nlp-29 in response to fungal infection. During embryogenesis, may play a role in epidermal morphogenesis together with plc-1. In Caenorhabditis elegans, this protein is 1-phosphatidylinositol 4,5-bisphosphate phosphodiesterase beta egl-8.